Here is a 555-residue protein sequence, read N- to C-terminus: Sulfite reductase [NADPH] hemoprotein beta-component (555 aa).

Residues Cys430, Cys436, Cys475, and Cys479 each coordinate [4Fe-4S] cluster. Cys479 contacts siroheme.

This sequence belongs to the nitrite and sulfite reductase 4Fe-4S domain family. In terms of assembly, alpha(8)-beta(8). The alpha component is a flavoprotein, the beta component is a hemoprotein. Requires siroheme as cofactor. [4Fe-4S] cluster is required as a cofactor.

It catalyses the reaction hydrogen sulfide + 3 NADP(+) + 3 H2O = sulfite + 3 NADPH + 4 H(+). Its pathway is sulfur metabolism; hydrogen sulfide biosynthesis; hydrogen sulfide from sulfite (NADPH route): step 1/1. Component of the sulfite reductase complex that catalyzes the 6-electron reduction of sulfite to sulfide. This is one of several activities required for the biosynthesis of L-cysteine from sulfate. The chain is Sulfite reductase [NADPH] hemoprotein beta-component from Leptospira biflexa serovar Patoc (strain Patoc 1 / Ames).